Reading from the N-terminus, the 505-residue chain is Maturase K (505 aa).

This sequence belongs to the intron maturase 2 family. MatK subfamily.

The protein localises to the plastid. It is found in the chloroplast. Its function is as follows. Usually encoded in the trnK tRNA gene intron. Probably assists in splicing its own and other chloroplast group II introns. The sequence is that of Maturase K from Coffea arabica (Arabian coffee).